The chain runs to 447 residues: Cobyrinate a,c-diamide synthase (447 aa).

The GATase cobBQ-type domain maps to 252–439 (KIAVAFDESF…AHQHCIGNPY (188 aa)). The active-site Nucleophile is the C331.

Belongs to the CobB/CbiA family. Requires Mg(2+) as cofactor.

It catalyses the reaction cob(II)yrinate + 2 L-glutamine + 2 ATP + 2 H2O = cob(II)yrinate a,c diamide + 2 L-glutamate + 2 ADP + 2 phosphate + 2 H(+). It carries out the reaction Ni-sirohydrochlorin + 2 L-glutamine + 2 ATP + 2 H2O = Ni-sirohydrochlorin a,c-diamide + 2 L-glutamate + 2 ADP + 2 phosphate + 2 H(+). It functions in the pathway cofactor biosynthesis; adenosylcobalamin biosynthesis; cob(II)yrinate a,c-diamide from sirohydrochlorin (anaerobic route): step 10/10. In terms of biological role, catalyzes the ATP-dependent amidation of the two carboxylate groups at positions a and c of cobyrinate, using either L-glutamine or ammonia as the nitrogen source. Involved in the biosynthesis of the unique nickel-containing tetrapyrrole coenzyme F430, the prosthetic group of methyl-coenzyme M reductase (MCR), which plays a key role in methanogenesis and anaerobic methane oxidation. Catalyzes the ATP-dependent amidation of the two carboxylate groups at positions a and c of Ni-sirohydrochlorin, using L-glutamine or ammonia as the nitrogen source. The sequence is that of Cobyrinate a,c-diamide synthase from Methanococcus maripaludis (strain C7 / ATCC BAA-1331).